Reading from the N-terminus, the 859-residue chain is MELQTKSPTTQNDFSQHTPMMRQYLRIKAEYPDLLVFYRMGDFYELFYDDAKKAAKLLNITLTARGQSAGHAIPMAGVPYHAVENYLTKLVRLGESVVICEQIGDPATSKGPVAREVTRIITPGTVSDEALLDEHRDNTLMVIHQEKDRFGIATLDITSGRFLIQEIISENALFAEIERIRPAELLISEENSVHPLKADSIKRRPPWEFDHATALTLLCQQFQTKSLDGFGITHLPLAITAAGCLLQYVNYTQKSALPHIHSIQAEQNEEALFIDANTRRNLELITNLQGEEVHSLAWLLDHTATPMGSRLLRRWINRPLRDQILLQQRQNAVSTLLEKRNYSEIYENLRHIGDLERIVARIALRSARPRDLMQLRQALGVLPTLHQQLTNLPLNKQLQEIKNNLGLFDELFRLLQKAIIENPPIVIRDGGVIADGYDAPLDELRNMSTNSHQFLIDLEQQERERTKINTLKVGYNRIHGYYIEISRAQAKQAPTEYIRRQTLKNVERYITPELKIFEDKVLSSRSRALAREKELYEQLLDTLIEKLIPLQQCASAIANLDVLNTLAERADTLNFNAPQFCDYPIIKIEAGRHPIVENVMTDPFMPNDTHLDEKRRMLIITGPNMGGKSTYMRQTALITLLAYIGSFVPAKNAQLGPIDRIFTRIGAADDLASGRSTFMVEMTETAAILHNATEESLVLMDEVGRGTSTFDGLSLAYACASYLATKLKAFALFATHYFELTALASTLPAVKNVHLDAVEHEEKIIFLHALREGPANKSYGLQVAQLAGIPRSVIQHARQKLEELENPVISETQQPQQNELFLPIENPVLTQLDKLNPDNLTPKQALDILYQLIQLRQQK.

ATP is bound at residue 622 to 629; that stretch reads GPNMGGKS.

It belongs to the DNA mismatch repair MutS family.

Its function is as follows. This protein is involved in the repair of mismatches in DNA. It is possible that it carries out the mismatch recognition step. This protein has a weak ATPase activity. The chain is DNA mismatch repair protein MutS from Coxiella burnetii (strain Dugway 5J108-111).